Reading from the N-terminus, the 215-residue chain is Cytochrome b6 (215 aa).

A helical transmembrane segment spans residues 32–52 (IFYCLGGITLTCFLVQVATGF). Cys-35 contributes to the heme c binding site. The heme b site is built by His-86 and His-100. 3 consecutive transmembrane segments (helical) span residues 90 to 110 (ASMM…TGGF), 116 to 136 (LTWV…VTGY), and 186 to 206 (LHTF…FLMI). His-187 and His-202 together coordinate heme b.

The protein belongs to the cytochrome b family. PetB subfamily. The 4 large subunits of the cytochrome b6-f complex are cytochrome b6, subunit IV (17 kDa polypeptide, PetD), cytochrome f and the Rieske protein, while the 4 small subunits are PetG, PetL, PetM and PetN. The complex functions as a dimer. Heme b serves as cofactor. Requires heme c as cofactor.

Its subcellular location is the plastid. It is found in the chloroplast thylakoid membrane. Component of the cytochrome b6-f complex, which mediates electron transfer between photosystem II (PSII) and photosystem I (PSI), cyclic electron flow around PSI, and state transitions. In Welwitschia mirabilis (Tree tumbo), this protein is Cytochrome b6.